A 1893-amino-acid polypeptide reads, in one-letter code: Serine-aspartate repeat-containing protein I (1893 aa).

The signal sequence occupies residues 1 to 54 (MNFKGVKLLKNSKKRLDFLPNTLNKYSIRKFTVGTASILVGATLFLGVSNEAEA). Residues 53–333 (EAAEKIDSPT…AHGINNKNKQ (281 aa)) are disordered. Over residues 54-222 (AAEKIDSPTK…AEEPATKEEA (169 aa)) the composition is skewed to basic and acidic residues. 21 tandem repeats follow at residues 72–83 (AATKEEAATTEE), 84–95 (PATKEEAATTEE), 96–107 (PATKEEAAIAEE), 108–119 (PATKEEAATTEE), 120–131 (PATKEEAAIAEE), 132–143 (PATKEEAATTEE), 144–155 (PATKEEAATTEE), 156–167 (PATKEEAAIAEE), 168–179 (PATKEEAATTEE), 180–191 (PATKEEAAIAEE), 192–203 (PATKEEAVTSEE), 204–215 (AATKEKAAIAEE), 216–227 (PATKEEAAIAEE), 228–239 (PETKEEAATTEE), 240–251 (PATKEEAAIAEE), 252–263 (AATKEKAVTSEE), 264–275 (AATKEKAAIAEE), 276–287 (AATKEKAAIAEE), 288–299 (PETKEEAATTEE), 300–311 (PETKEEAAIAEE), and 312–323 (PATKEKAVTSEE). The tract at residues 72-323 (AATKEEAATT…TKEKAVTSEE (252 aa)) is 21 X 12 AA tandem repeat of [AP]-[AE]-T-K-E-[EK]-A-[AV]-[IT]-[AST]-E-E. Residues 240-284 (PATKEEAAIAEEAATKEKAVTSEEAATKEKAAIAEEAATKEKAAI) are compositionally biased toward basic and acidic residues. Positions 286 to 302 (EEPETKEEAATTEEPET) are enriched in acidic residues. The segment covering 312 to 325 (PATKEKAVTSEEAH) has biased composition (basic and acidic residues). Positions 324–755 (AHGINNKNKQ…GSSTAQGDNP (432 aa)) are ligand binding A region. CNA-B domains follow at residues 756 to 874 (TYNL…YETP) and 875 to 984 (KYSL…YFDE). Residues 941–1867 (KPEGLTQTTT…GNNTQNNGTL (927 aa)) are disordered. The span at 955–975 (DENKDADGEEVHVTITDHDDF) shows a compositional bias: basic and acidic residues. The segment covering 981–1836 (YFDEDSDADA…DSDADADADS (856 aa)) has biased composition (acidic residues). A compositionally biased stretch (basic and acidic residues) spans 1837–1851 (DADKYHNDTADKSND). The short motif at 1854 to 1858 (LPDTG) is the LPXTG sorting signal element. At Thr1857 the chain carries Pentaglycyl murein peptidoglycan amidated threonine. Residues 1858 to 1893 (GNNTQNNGTLFGSLFAALGGLFLVGSRRKNKNNEEK) constitute a propeptide, removed by sortase.

This sequence belongs to the serine-aspartate repeat-containing protein (SDr) family.

Its subcellular location is the secreted. The protein localises to the cell wall. Responsible for collagen binding by S.saprophyticus. In Staphylococcus saprophyticus, this protein is Serine-aspartate repeat-containing protein I (sdrI).